A 217-amino-acid chain; its full sequence is Probable GTP-binding protein EngB (217 aa).

Positions 31 to 205 (VGVEIAFAGR…LAILDAWCHP (175 aa)) constitute an EngB-type G domain. GTP contacts are provided by residues 39-46 (GRSNAGKS), 66-70 (GRTQL), 84-87 (DLPG), 151-154 (TKAD), and 184-186 (FSA). Mg(2+) contacts are provided by Ser46 and Thr68.

It belongs to the TRAFAC class TrmE-Era-EngA-EngB-Septin-like GTPase superfamily. EngB GTPase family. Mg(2+) is required as a cofactor.

Necessary for normal cell division and for the maintenance of normal septation. The chain is Probable GTP-binding protein EngB from Shewanella amazonensis (strain ATCC BAA-1098 / SB2B).